The primary structure comprises 181 residues: Probable pyruvoyl-dependent arginine decarboxylase (181 aa).

Serine 43 is subject to Pyruvic acid (Ser).

This sequence belongs to the PdaD family. Pyruvate is required as a cofactor.

The catalysed reaction is L-arginine + H(+) = agmatine + CO2. In Chlorobaculum tepidum (strain ATCC 49652 / DSM 12025 / NBRC 103806 / TLS) (Chlorobium tepidum), this protein is Probable pyruvoyl-dependent arginine decarboxylase.